A 440-amino-acid polypeptide reads, in one-letter code: MEQLARLYHDHIQVLNQRVSEIISRENLSGLVIHSGQPHRQFLDDMDYPFKVNPHFKAWLPVIENPNSWLVINGSDKPLLIFYRPVDFWHKVADEPSDFWAEHVDIKFLTKADKVAEYLPAGIDNWAYIGEHLDVADVLGFSRRNPDSVLSYLNYHRATKTDYELACMRKANEIAVTGHQAAKTAFYNGASEFEILQVYLSAISQGENQVPYSSIVALNENSAILHYTALEYTSPAQRRSFLIDAGANYNGYASDITRSYSFEKNIFDDLITAMDNMQLQIISMMKPGVSYAELHIQTHYKLAQILLDFDIVSGDVQGLVEQGITRVFFPHGLGHMLGIQVHDMGGFLSDEKGTHVAAPEAHPFLRCTRELDINQVLTIEPGVYIIDSLLAELKQDQRQSQINWNTVDVLRPFGGIRIEDNVIVHGDRIENMTRNLGLNR.

Asp-244, Asp-255, His-335, Glu-380, and Glu-419 together coordinate Mn(2+).

The protein belongs to the peptidase M24B family. Bacterial-type prolidase subfamily. Mn(2+) serves as cofactor.

It catalyses the reaction Xaa-L-Pro dipeptide + H2O = an L-alpha-amino acid + L-proline. Functionally, splits dipeptides with a prolyl residue in the C-terminal position. The polypeptide is Xaa-Pro dipeptidase (Shewanella pealeana (strain ATCC 700345 / ANG-SQ1)).